The primary structure comprises 450 residues: Phosphoglucosamine mutase (450 aa).

Catalysis depends on serine 102, which acts as the Phosphoserine intermediate. Mg(2+)-binding residues include serine 102, aspartate 242, aspartate 244, and aspartate 246. Serine 102 bears the Phosphoserine mark.

Belongs to the phosphohexose mutase family. The cofactor is Mg(2+). In terms of processing, activated by phosphorylation.

The enzyme catalyses alpha-D-glucosamine 1-phosphate = D-glucosamine 6-phosphate. In terms of biological role, catalyzes the conversion of glucosamine-6-phosphate to glucosamine-1-phosphate. This chain is Phosphoglucosamine mutase, found in Staphylococcus haemolyticus (strain JCSC1435).